Here is a 188-residue protein sequence, read N- to C-terminus: Pyridoxal 5'-phosphate synthase subunit PdxT (188 aa).

An L-glutamine-binding site is contributed by 46-48; that stretch reads GES. Cysteine 78 (nucleophile) is an active-site residue. Residues arginine 105 and 134–135 contribute to the L-glutamine site; that span reads IR. Catalysis depends on charge relay system residues histidine 170 and glutamate 172.

It belongs to the glutaminase PdxT/SNO family. As to quaternary structure, in the presence of PdxS, forms a dodecamer of heterodimers. Only shows activity in the heterodimer.

It carries out the reaction aldehydo-D-ribose 5-phosphate + D-glyceraldehyde 3-phosphate + L-glutamine = pyridoxal 5'-phosphate + L-glutamate + phosphate + 3 H2O + H(+). The enzyme catalyses L-glutamine + H2O = L-glutamate + NH4(+). It functions in the pathway cofactor biosynthesis; pyridoxal 5'-phosphate biosynthesis. Its function is as follows. Catalyzes the hydrolysis of glutamine to glutamate and ammonia as part of the biosynthesis of pyridoxal 5'-phosphate. The resulting ammonia molecule is channeled to the active site of PdxS. The polypeptide is Pyridoxal 5'-phosphate synthase subunit PdxT (Thermotoga maritima (strain ATCC 43589 / DSM 3109 / JCM 10099 / NBRC 100826 / MSB8)).